Consider the following 179-residue polypeptide: Large ribosomal subunit protein uL6 (179 aa).

The protein belongs to the universal ribosomal protein uL6 family. As to quaternary structure, part of the 50S ribosomal subunit.

This protein binds to the 23S rRNA, and is important in its secondary structure. It is located near the subunit interface in the base of the L7/L12 stalk, and near the tRNA binding site of the peptidyltransferase center. The protein is Large ribosomal subunit protein uL6 of Chloroherpeton thalassium (strain ATCC 35110 / GB-78).